The sequence spans 205 residues: SCO2-like protein RF_0960 (205 aa).

Residues cysteine 82, cysteine 86, and histidine 172 each contribute to the Cu cation site.

Belongs to the SCO1/2 family.

This Rickettsia felis (strain ATCC VR-1525 / URRWXCal2) (Rickettsia azadi) protein is SCO2-like protein RF_0960.